The following is an 86-amino-acid chain: Large ribosomal subunit protein eL30 (86 aa).

The protein belongs to the eukaryotic ribosomal protein eL30 family.

This chain is Large ribosomal subunit protein eL30 (rpl30e), found in Archaeoglobus fulgidus (strain ATCC 49558 / DSM 4304 / JCM 9628 / NBRC 100126 / VC-16).